An 89-amino-acid polypeptide reads, in one-letter code: Submaxillary mucin (89 aa).

The tract at residues 1-89 (AGSVGRTAGG…VGGSPVATTL (89 aa)) is disordered. Residue Ser3 is glycosylated (O-linked (GalNAc...) serine; partial). Thr7 and Thr14 each carry an O-linked (GalNAc...) threonine; partial glycan. Residue Ser15 is glycosylated (O-linked (GalNAc...) serine; partial). Residue Thr23 is glycosylated (O-linked (GalNAc...) threonine; partial). Ser25 carries an O-linked (GalNAc...) serine; partial glycan. Thr27 carries O-linked (GalNAc...) threonine; partial glycosylation. The O-linked (GalNAc...) serine; partial glycan is linked to Ser29. Residue Thr34 is glycosylated (O-linked (GalNAc...) threonine; partial). Ser38 carries O-linked (GalNAc...) serine; partial glycosylation. Thr42 is a glycosylation site (O-linked (GalNAc...) threonine; partial). O-linked (GalNAc...) serine; partial glycosylation is found at Ser47 and Ser49. Thr50 carries an O-linked (GalNAc...) threonine; partial glycan. A glycan (O-linked (GalNAc...) serine; partial) is linked at Ser54. Residues 56 to 71 (APGTTLAGRAGTTLGP) are compositionally biased toward low complexity. Residues Thr59, Thr60, Thr67, and Thr68 are each glycosylated (O-linked (GalNAc...) threonine; partial). Ser73 and Ser76 each carry an O-linked (GalNAc...) serine; partial glycan. The O-linked (GalNAc...) threonine; partial glycan is linked to Thr78. An O-linked (GalNAc...) serine; partial glycan is attached at Ser83.

In terms of processing, heavily O-glycosylated at most but not all Ser and Thr residues. In terms of tissue distribution, expressed in the submaxillary salivary gland.

It localises to the secreted. This Canis lupus familiaris (Dog) protein is Submaxillary mucin.